Consider the following 427-residue polypeptide: Enolase (427 aa).

Glutamine 163 lines the (2R)-2-phosphoglycerate pocket. The active-site Proton donor is the glutamate 205. Positions 242, 285, and 312 each coordinate Mg(2+). (2R)-2-phosphoglycerate-binding residues include lysine 337, arginine 366, serine 367, and lysine 388. The active-site Proton acceptor is the lysine 337.

This sequence belongs to the enolase family. Mg(2+) is required as a cofactor.

The protein localises to the cytoplasm. Its subcellular location is the secreted. It is found in the cell surface. It catalyses the reaction (2R)-2-phosphoglycerate = phosphoenolpyruvate + H2O. Its pathway is carbohydrate degradation; glycolysis; pyruvate from D-glyceraldehyde 3-phosphate: step 4/5. In terms of biological role, catalyzes the reversible conversion of 2-phosphoglycerate (2-PG) into phosphoenolpyruvate (PEP). It is essential for the degradation of carbohydrates via glycolysis. This Rhodopseudomonas palustris (strain ATCC BAA-98 / CGA009) protein is Enolase.